A 355-amino-acid polypeptide reads, in one-letter code: 3-isopropylmalate dehydrogenase (355 aa).

Substrate-binding residues include Arg90, Arg100, Arg128, and Asp222. Mg(2+)-binding residues include Asp222, Asp246, and Asp250. An NAD(+)-binding site is contributed by 280–292 (GSAPDIAGKGIAN).

This sequence belongs to the isocitrate and isopropylmalate dehydrogenases family. LeuB type 1 subfamily. As to quaternary structure, homodimer. Requires Mg(2+) as cofactor. The cofactor is Mn(2+).

It localises to the cytoplasm. The enzyme catalyses (2R,3S)-3-isopropylmalate + NAD(+) = 4-methyl-2-oxopentanoate + CO2 + NADH. Its pathway is amino-acid biosynthesis; L-leucine biosynthesis; L-leucine from 3-methyl-2-oxobutanoate: step 3/4. Its function is as follows. Catalyzes the oxidation of 3-carboxy-2-hydroxy-4-methylpentanoate (3-isopropylmalate) to 3-carboxy-4-methyl-2-oxopentanoate. The product decarboxylates to 4-methyl-2 oxopentanoate. This is 3-isopropylmalate dehydrogenase from Burkholderia mallei (strain ATCC 23344).